The following is a 426-amino-acid chain: Histidine--tRNA ligase (426 aa).

It belongs to the class-II aminoacyl-tRNA synthetase family. Homodimer.

It localises to the cytoplasm. The catalysed reaction is tRNA(His) + L-histidine + ATP = L-histidyl-tRNA(His) + AMP + diphosphate + H(+). The polypeptide is Histidine--tRNA ligase (Geobacillus thermodenitrificans (strain NG80-2)).